A 146-amino-acid polypeptide reads, in one-letter code: Antiholin-like protein LrgA (146 aa).

4 consecutive transmembrane segments (helical) span residues 7–29 (YGFL…IAAI), 34–53 (IPAS…LKVI), 65–87 (LTSL…LGVM), and 97–119 (VILL…ILSL).

It belongs to the CidA/LrgA family. LrgA subfamily.

It localises to the cell membrane. Inhibits the expression or activity of extracellular murein hydrolases by interacting, possibly with LrgB, with the holin-like protein CidA. The LrgAB and CidA proteins may affect the proton motive force of the membrane. May be involved in programmed cell death (PCD), possibly triggering PCD in response to antibiotics and environmental stresses. This Bacillus subtilis (strain 168) protein is Antiholin-like protein LrgA.